Here is a 235-residue protein sequence, read N- to C-terminus: Motile sperm domain-containing protein 3 (235 aa).

Disordered stretches follow at residues 1–25 and 143–171; these read MRRG…RGAP and ELQG…FQEH. The MSP domain occupies 33 to 145; the sequence is PVLVFPPDLV…RAPAYPLELQ (113 aa). Pro residues predominate over residues 149–164; sequence DPAPRPGPPAGTPPPT. The next 2 membrane-spanning stretches (helical) occupy residues 180 to 200 and 213 to 233; these read SFLL…LPLP and VSLG…MVFL.

The protein localises to the membrane. The protein is Motile sperm domain-containing protein 3 (MOSPD3) of Homo sapiens (Human).